Consider the following 397-residue polypeptide: Citrate synthase (397 aa).

Catalysis depends on residues His-266 and Asp-320.

It belongs to the citrate synthase family.

It carries out the reaction oxaloacetate + acetyl-CoA + H2O = citrate + CoA + H(+). The protein operates within carbohydrate metabolism; tricarboxylic acid cycle; isocitrate from oxaloacetate: step 1/2. This Synechocystis sp. (strain ATCC 27184 / PCC 6803 / Kazusa) protein is Citrate synthase (gltA).